Consider the following 160-residue polypeptide: UPF0178 protein PA14_69280 (160 aa).

The protein belongs to the UPF0178 family.

This is UPF0178 protein PA14_69280 from Pseudomonas aeruginosa (strain UCBPP-PA14).